The sequence spans 513 residues: Lysine--tRNA ligase (513 aa).

Mg(2+) contacts are provided by Glu-422 and Glu-429.

Belongs to the class-II aminoacyl-tRNA synthetase family. As to quaternary structure, homodimer. Mg(2+) serves as cofactor.

Its subcellular location is the cytoplasm. The catalysed reaction is tRNA(Lys) + L-lysine + ATP = L-lysyl-tRNA(Lys) + AMP + diphosphate. This is Lysine--tRNA ligase from Tolumonas auensis (strain DSM 9187 / NBRC 110442 / TA 4).